Reading from the N-terminus, the 224-residue chain is Dehydration-responsive element-binding protein 1G (224 aa).

Residues 1-16 are compositionally biased toward polar residues; the sequence is MDVSAALSSDYSSGTP. The disordered stretch occupies residues 1–46; sequence MDVSAALSSDYSSGTPSPVAADADDGSSAYMTVSSAPPKRRAGRTK. The segment at residues 54–111 is a DNA-binding region (AP2/ERF); the sequence is VFKGVRRRNPGRWVCEVREPHGKQRIWLGTFETAEMAARAHDVAALALRGRAACLNFA. Disordered regions lie at residues 139 to 161 and 200 to 224; these read AFRP…SGAT and PPMA…LWSY.

This sequence belongs to the AP2/ERF transcription factor family. ERF subfamily.

It is found in the nucleus. Transcriptional activator that binds specifically to the DNA sequence 5'-[AG]CCGAC-3'. Binding to the C-repeat/DRE element mediates high salinity- and dehydration-inducible transcription. This chain is Dehydration-responsive element-binding protein 1G (DREB1G), found in Oryza sativa subsp. japonica (Rice).